The sequence spans 400 residues: Forkhead box protein A4-B (400 aa).

Residues 119–213 (KPPYSYISLI…ENGCYLRRQK (95 aa)) constitute a DNA-binding region (fork-head). The segment covering 218–234 (ERSKSGEGERKGNKPGD) has biased composition (basic and acidic residues). Positions 218-290 (ERSKSGEGER…VGFSPTSEQA (73 aa)) are disordered. Composition is skewed to polar residues over residues 249–258 (DCSSSRSPQA) and 267–277 (STGSSIHQATG).

As to expression, primarily expressed in the dorsal blastopore lip (Spemann organizer) of early gastrulae. At later stages, expressed in the dorsal mesoderm and the neural floor plate. In the dorsal mesoderm, expressed in the notochord but not in the presomitic mesoderm. Also expressed in the mid-brain area.

Its subcellular location is the nucleus. Its function is as follows. Transcriptional repressor involved in embryonic nervous system development. Plays a role in the induction and patterning of the anterior-posterior neural axis. Involved in the establishment of floor plate differentiation from neural plate cells during gastrulation. Binds the anf1 promoter sequence to restrict expression of anf1 to the anterior of the neural plate, thereby patterning the forebrain. Can bind to the HNF-3-alpha DNA target sequence. Cooperates with t/bra in a dose-dependent manner to specify dorsal mesoderm formation, including notochord. May be involved in the dorso-ventral patterning of the mesoderm. Binds to DNA via the target sequence 5'-[GA]TAAA[TC]A-3', with 5'-GTAAATA-3' being the preferred binding site. The chain is Forkhead box protein A4-B (foxa4-b) from Xenopus laevis (African clawed frog).